A 573-amino-acid polypeptide reads, in one-letter code: Sulfite oxidase, mitochondrial (573 aa).

Residues 1 to 34 (MRLLRPSWAGLLRGRHHQHQRHHRRLLLTTSRGS) constitute a mitochondrion transit peptide. Residues 14 to 26 (GRHHQHQRHHRRL) show a composition bias toward basic residues. The segment at 14–50 (GRHHQHQRHHRRLLLTTSRGSNGEREEQQHSQWSSPG) is disordered. In terms of domain architecture, Cytochrome b5 heme-binding spans 108 to 186 (LPTYRAEEVE…LEGFRIGNLE (79 aa)). Heme b-binding residues include His144 and His168. The hinge stretch occupies residues 190 to 199 (VTNVDDELGS). The interval 200 to 423 (PWSQEPQRHA…DSHWQQNDYK (224 aa)) is moco domain. Residues 240–244 (YVRNH), Cys287, Asp344, His383, Arg388, and 399–401 (NVK) each bind Mo-molybdopterin. The segment at 424-567 (GFSPSTDWDT…RGVLANAYHK (144 aa)) is homodimerization.

The cofactor is heme b. Mo-molybdopterin serves as cofactor. As to expression, expressed in the ensheathing glia with relatively weak expression in the CNS cortex (at protein level).

It is found in the mitochondrion intermembrane space. The enzyme catalyses sulfite + O2 + H2O = sulfate + H2O2. It functions in the pathway energy metabolism; sulfur metabolism. Its function is as follows. Required in ensheathing glial cells for normal larval locomotion. Oxidizes sulfite which is required to maintain glutamate homeostasis and as a consequence, neuronal network function. The polypeptide is Sulfite oxidase, mitochondrial (Drosophila melanogaster (Fruit fly)).